The following is a 319-amino-acid chain: ATP-dependent 6-phosphofructokinase (319 aa).

Glycine 11 lines the ATP pocket. Residue 21–25 (RAVVR) participates in ADP binding. Residues 72–73 (RC) and 102–105 (GDGS) contribute to the ATP site. Aspartate 103 provides a ligand contact to Mg(2+). 125 to 127 (TID) lines the substrate pocket. Aspartate 127 acts as the Proton acceptor in catalysis. Arginine 154 is a binding site for ADP. Substrate-binding positions include arginine 162 and 169–171 (MGR). Residues 185-187 (GAE), arginine 211, and 213-215 (KKH) each bind ADP. Substrate-binding positions include glutamate 222, arginine 243, and 249–252 (HVQR).

Belongs to the phosphofructokinase type A (PFKA) family. ATP-dependent PFK group I subfamily. Prokaryotic clade 'B1' sub-subfamily. Homotetramer. It depends on Mg(2+) as a cofactor.

Its subcellular location is the cytoplasm. It carries out the reaction beta-D-fructose 6-phosphate + ATP = beta-D-fructose 1,6-bisphosphate + ADP + H(+). Its pathway is carbohydrate degradation; glycolysis; D-glyceraldehyde 3-phosphate and glycerone phosphate from D-glucose: step 3/4. With respect to regulation, allosterically activated by ADP and other diphosphonucleosides, and allosterically inhibited by phosphoenolpyruvate. In terms of biological role, catalyzes the phosphorylation of D-fructose 6-phosphate to fructose 1,6-bisphosphate by ATP, the first committing step of glycolysis. The sequence is that of ATP-dependent 6-phosphofructokinase from Bacillus mycoides (strain KBAB4) (Bacillus weihenstephanensis).